Reading from the N-terminus, the 784-residue chain is DNA repair and recombination protein RAD54-like (784 aa).

Positions 2–9 are required for chromatin remodeling, strand pairing activities and coupling of ATPase activity; that stretch reads RRSLAPSQ. Phosphothreonine is present on threonine 22. The Helicase ATP-binding domain occupies 169–344; that stretch reads EGKKGNFNGC…FSLVNFVNPE (176 aa). 182 to 189 contacts ATP; it reads DEMGLGKT. The short motif at 295-298 is the DEGH box element; that stretch reads DEGH. The 158-residue stretch at 501 to 658 folds into the Helicase C-terminal domain; it reads LLDFMLATIR…NNESAEKHFT (158 aa). The interval 742-784 is disordered; sequence QAIKESEETKQEAEDTSIPAKSKRKRSTTPESDDCNDEDFKGF. Residues 745-754 are compositionally biased toward basic and acidic residues; that stretch reads KESEETKQEA.

Belongs to the SNF2/RAD54 helicase family. In terms of assembly, interacts (via N-terminus) with spn-A/Rad51.

It is found in the nucleus. Functionally, involved in mitotic DNA repair and meiotic recombination. Functions in the recombinational DNA repair pathway. Essential for interhomolog gene conversion (GC), but may have a less important role in intersister GC than spn-A/Rad51. In the presence of DNA, spn-A/Rad51 enhances the ATPase activity of okr/Rad54. The chain is DNA repair and recombination protein RAD54-like from Drosophila willistoni (Fruit fly).